A 478-amino-acid polypeptide reads, in one-letter code: 3-isopropylmalate dehydratase large subunit (478 aa).

Positions 355, 415, and 418 each coordinate [4Fe-4S] cluster.

It belongs to the aconitase/IPM isomerase family. LeuC type 1 subfamily. As to quaternary structure, heterodimer of LeuC and LeuD. [4Fe-4S] cluster serves as cofactor.

It catalyses the reaction (2R,3S)-3-isopropylmalate = (2S)-2-isopropylmalate. Its pathway is amino-acid biosynthesis; L-leucine biosynthesis; L-leucine from 3-methyl-2-oxobutanoate: step 2/4. Catalyzes the isomerization between 2-isopropylmalate and 3-isopropylmalate, via the formation of 2-isopropylmaleate. This chain is 3-isopropylmalate dehydratase large subunit, found in Paracoccus denitrificans (strain Pd 1222).